The primary structure comprises 325 residues: Tagatose 1,6-diphosphate aldolase 1 (325 aa).

Belongs to the aldolase LacD family.

It catalyses the reaction D-tagatofuranose 1,6-bisphosphate = D-glyceraldehyde 3-phosphate + dihydroxyacetone phosphate. It participates in carbohydrate metabolism; D-tagatose 6-phosphate degradation; D-glyceraldehyde 3-phosphate and glycerone phosphate from D-tagatose 6-phosphate: step 2/2. This Streptococcus pyogenes serotype M3 (strain ATCC BAA-595 / MGAS315) protein is Tagatose 1,6-diphosphate aldolase 1 (lacD1).